Consider the following 404-residue polypeptide: Glycosylated lysosomal membrane protein (404 aa).

A signal peptide spans 1-26; sequence MSGYEKPSRGWGFCALSPVLLSLLMA. The Lumenal segment spans residues 27-370; the sequence is APLGLLGEET…VDALSPLVLG (344 aa). Asn63, Asn132, Asn157, Asn185, and Asn228 each carry an N-linked (GlcNAc...) asparagine glycan. A helical transmembrane segment spans residues 371–391; it reads IMAVALGAPALMLLAGGLFLL. Residues 392–404 are Cytoplasmic-facing; the sequence is LGRKRDSEYQSIN. Positions 400–404 match the Lysosomal targeting motif motif; that stretch reads YQSIN.

Belongs to the GLMP family. As to quaternary structure, interacts (via lumenal domain) with lysosomal protein MFSD1; the interaction starts while both proteins are still in the endoplasmic reticulum and is required for stabilization of MFSD1 in lysosomes but has no direct effect on its targeting to lysosomes or transporter activity. Post-translationally, highly N-glycosylated. N-glycosylation is essential for GLMP stability and for MFSD1 lysosomal localization.

The protein localises to the lysosome membrane. In terms of biological role, required to protect lysosomal transporter MFSD1 from lysosomal proteolysis and for MFSD1 lysosomal localization. In Bos taurus (Bovine), this protein is Glycosylated lysosomal membrane protein.